Here is a 370-residue protein sequence, read N- to C-terminus: Cobalt-precorrin-5B C(1)-methyltransferase (370 aa).

This sequence belongs to the CbiD family.

The catalysed reaction is Co-precorrin-5B + S-adenosyl-L-methionine = Co-precorrin-6A + S-adenosyl-L-homocysteine. Its pathway is cofactor biosynthesis; adenosylcobalamin biosynthesis; cob(II)yrinate a,c-diamide from sirohydrochlorin (anaerobic route): step 6/10. Its function is as follows. Catalyzes the methylation of C-1 in cobalt-precorrin-5B to form cobalt-precorrin-6A. This Prochlorococcus marinus (strain MIT 9312) protein is Cobalt-precorrin-5B C(1)-methyltransferase.